The primary structure comprises 142 residues: 3-hydroxyacyl-[acyl-carrier-protein] dehydratase FabZ (142 aa).

H48 is a catalytic residue.

It belongs to the thioester dehydratase family. FabZ subfamily.

It is found in the cytoplasm. The catalysed reaction is a (3R)-hydroxyacyl-[ACP] = a (2E)-enoyl-[ACP] + H2O. Functionally, involved in unsaturated fatty acids biosynthesis. Catalyzes the dehydration of short chain beta-hydroxyacyl-ACPs and long chain saturated and unsaturated beta-hydroxyacyl-ACPs. In Clostridioides difficile (strain 630) (Peptoclostridium difficile), this protein is 3-hydroxyacyl-[acyl-carrier-protein] dehydratase FabZ.